The sequence spans 429 residues: Glutamate-1-semialdehyde 2,1-aminomutase (429 aa).

Position 265 is an N6-(pyridoxal phosphate)lysine (Lys-265).

It belongs to the class-III pyridoxal-phosphate-dependent aminotransferase family. HemL subfamily. As to quaternary structure, homodimer. Requires pyridoxal 5'-phosphate as cofactor.

It localises to the cytoplasm. It catalyses the reaction (S)-4-amino-5-oxopentanoate = 5-aminolevulinate. The protein operates within porphyrin-containing compound metabolism; protoporphyrin-IX biosynthesis; 5-aminolevulinate from L-glutamyl-tRNA(Glu): step 2/2. The sequence is that of Glutamate-1-semialdehyde 2,1-aminomutase from Legionella pneumophila subsp. pneumophila (strain Philadelphia 1 / ATCC 33152 / DSM 7513).